We begin with the raw amino-acid sequence, 311 residues long: Methionyl-tRNA formyltransferase (311 aa).

Residue 110–113 participates in (6S)-5,6,7,8-tetrahydrofolate binding; sequence SLLP.

It belongs to the Fmt family.

The enzyme catalyses L-methionyl-tRNA(fMet) + (6R)-10-formyltetrahydrofolate = N-formyl-L-methionyl-tRNA(fMet) + (6S)-5,6,7,8-tetrahydrofolate + H(+). In terms of biological role, attaches a formyl group to the free amino group of methionyl-tRNA(fMet). The formyl group appears to play a dual role in the initiator identity of N-formylmethionyl-tRNA by promoting its recognition by IF2 and preventing the misappropriation of this tRNA by the elongation apparatus. This chain is Methionyl-tRNA formyltransferase, found in Streptococcus pyogenes serotype M6 (strain ATCC BAA-946 / MGAS10394).